Reading from the N-terminus, the 614-residue chain is Translation initiation factor IF-2 (614 aa).

The tr-type G domain maps to 115 to 283 (ARAPIVTIMG…ILLIAELNNY (169 aa)). Residues 124–131 (GHVDHGKT) are G1. 124 to 131 (GHVDHGKT) contacts GTP. The segment at 149–153 (GITQH) is G2. Positions 170-173 (DTPG) are G3. GTP contacts are provided by residues 170–174 (DTPGH) and 224–227 (NKMD). Positions 224 to 227 (NKMD) are G4. The G5 stretch occupies residues 260-262 (SAL).

Belongs to the TRAFAC class translation factor GTPase superfamily. Classic translation factor GTPase family. IF-2 subfamily.

The protein resides in the cytoplasm. One of the essential components for the initiation of protein synthesis. Protects formylmethionyl-tRNA from spontaneous hydrolysis and promotes its binding to the 30S ribosomal subunits. Also involved in the hydrolysis of GTP during the formation of the 70S ribosomal complex. The polypeptide is Translation initiation factor IF-2 (Ureaplasma parvum serovar 3 (strain ATCC 27815 / 27 / NCTC 11736)).